Here is a 598-residue protein sequence, read N- to C-terminus: Serine/threonine-protein kinase cot-1 (598 aa).

3 stretches are compositionally biased toward polar residues: residues 1-16, 24-33, and 99-126; these read MDNTNRPHLNLGTNDT, TYPTTPSTFP, and PRTSGNSGQQQTYGNYLSAPMPSNTQTE. Disordered regions lie at residues 1 to 46, 80 to 148, and 163 to 190; these read MDNT…GGSQ, GSAG…NQKK, and RARERNQRQSEMEQKLGETNDARRRESI. In terms of domain architecture, Protein kinase spans 214 to 518; the sequence is YQTIKIIGKG…AHEIKSHAFF (305 aa). ATP is bound by residues 220 to 228 and Lys243; that span reads IGKGAFGEV. The active-site Proton acceptor is Asp337. In terms of domain architecture, AGC-kinase C-terminal spans 519–598; that stretch reads RGVEFDSLRR…TFKRFDNNFR (80 aa).

The protein belongs to the protein kinase superfamily. STE Ser/Thr protein kinase family. COT1 subfamily.

It carries out the reaction L-seryl-[protein] + ATP = O-phospho-L-seryl-[protein] + ADP + H(+). The catalysed reaction is L-threonyl-[protein] + ATP = O-phospho-L-threonyl-[protein] + ADP + H(+). Functionally, protein kinase required for hyphal elongation. This Neurospora crassa (strain ATCC 24698 / 74-OR23-1A / CBS 708.71 / DSM 1257 / FGSC 987) protein is Serine/threonine-protein kinase cot-1 (cot-1).